Here is a 391-residue protein sequence, read N- to C-terminus: Putative glutamate--cysteine ligase 2-2 (391 aa).

Belongs to the glutamate--cysteine ligase type 2 family. YbdK subfamily.

The enzyme catalyses L-cysteine + L-glutamate + ATP = gamma-L-glutamyl-L-cysteine + ADP + phosphate + H(+). Functionally, ATP-dependent carboxylate-amine ligase which exhibits weak glutamate--cysteine ligase activity. In Saccharopolyspora erythraea (strain ATCC 11635 / DSM 40517 / JCM 4748 / NBRC 13426 / NCIMB 8594 / NRRL 2338), this protein is Putative glutamate--cysteine ligase 2-2.